The chain runs to 454 residues: Putative flavin-containing monoamine oxidase AofH (454 aa).

This sequence belongs to the flavin monoamine oxidase family. It depends on FAD as a cofactor.

The chain is Putative flavin-containing monoamine oxidase AofH (aofH) from Mycobacterium tuberculosis (strain CDC 1551 / Oshkosh).